Here is a 549-residue protein sequence, read N- to C-terminus: MKNINPTQTSAWQALQKHYDEMKDVTIAELFANDSDRFAKFSATFDDLMLVDFSKNRITEETLAKLQDLAKETDLAGAIKSMFSGEKINRTEDRAVLHVALRNRSNTPIIVDGKDVMPEVNAVLEKMKTFSQAIISGQWKGYTGKAITDVVNIGIGGSDLGPFMVTEALRPYKNHLTMHFVSNVDGTHIAEVLKKVNPETTLFLVASKTFTTQETMTNAHSARDWFLKTAGDEKHVAKHFAALSTNAKAVGEFGIDTANMFEFWDWVGGRYSLWSAIGLSIILSVGFDNFVELLSGAHAMDKHFSTTPAEKNLPILLALIGIWYNNFFGAETEAILPYDQYMHRFAAYFQQGNMESNGKYVDRNGNAVDYQTGPIIWGEPGTNGQHAFYQLIHQGTKMVPCDFIAPAITHNPLSDHHQKLLSNFFAQTEALAFGKSREVVEQEYRDQGKDPAQLEHVVPFKVFEGNRPTNSILLREITPFSLGALIALYEHKIFTQGVILNIFTFDQWGVELGKQLANRILPELGDDKAISSHDSSTNGLINRYKAWRA.

The active-site Proton donor is the glutamate 355. Active-site residues include histidine 386 and lysine 514.

Belongs to the GPI family.

The protein localises to the cytoplasm. It catalyses the reaction alpha-D-glucose 6-phosphate = beta-D-fructose 6-phosphate. Its pathway is carbohydrate biosynthesis; gluconeogenesis. It participates in carbohydrate degradation; glycolysis; D-glyceraldehyde 3-phosphate and glycerone phosphate from D-glucose: step 2/4. Its function is as follows. Catalyzes the reversible isomerization of glucose-6-phosphate to fructose-6-phosphate. The chain is Glucose-6-phosphate isomerase from Salmonella paratyphi B (strain ATCC BAA-1250 / SPB7).